The following is a 271-amino-acid chain: Tryptophan synthase alpha chain (271 aa).

Active-site proton acceptor residues include Glu53 and Asp64.

It belongs to the TrpA family. Tetramer of two alpha and two beta chains.

It catalyses the reaction (1S,2R)-1-C-(indol-3-yl)glycerol 3-phosphate + L-serine = D-glyceraldehyde 3-phosphate + L-tryptophan + H2O. It participates in amino-acid biosynthesis; L-tryptophan biosynthesis; L-tryptophan from chorismate: step 5/5. The alpha subunit is responsible for the aldol cleavage of indoleglycerol phosphate to indole and glyceraldehyde 3-phosphate. This is Tryptophan synthase alpha chain from Streptomyces coelicolor (strain ATCC BAA-471 / A3(2) / M145).